Reading from the N-terminus, the 103-residue chain is Large ribosomal subunit protein bL21 (103 aa).

Belongs to the bacterial ribosomal protein bL21 family. As to quaternary structure, part of the 50S ribosomal subunit. Contacts protein L20.

Functionally, this protein binds to 23S rRNA in the presence of protein L20. The sequence is that of Large ribosomal subunit protein bL21 from Mycobacterium leprae (strain Br4923).